We begin with the raw amino-acid sequence, 689 residues long: Elongation factor G (689 aa).

In terms of domain architecture, tr-type G spans 8–282; that stretch reads LNTRNIGIMA…AVVDYLPSPI (275 aa). Residues 17–24, 81–85, and 135–138 each bind GTP; these read AHIDAGKT, DTPGH, and NKMD.

Belongs to the TRAFAC class translation factor GTPase superfamily. Classic translation factor GTPase family. EF-G/EF-2 subfamily.

The protein resides in the cytoplasm. In terms of biological role, catalyzes the GTP-dependent ribosomal translocation step during translation elongation. During this step, the ribosome changes from the pre-translocational (PRE) to the post-translocational (POST) state as the newly formed A-site-bound peptidyl-tRNA and P-site-bound deacylated tRNA move to the P and E sites, respectively. Catalyzes the coordinated movement of the two tRNA molecules, the mRNA and conformational changes in the ribosome. This chain is Elongation factor G, found in Mycoplasma capricolum subsp. capricolum (strain California kid / ATCC 27343 / NCTC 10154).